Consider the following 218-residue polypeptide: Adenylate kinase (218 aa).

10-15 (GAGKGT) contacts ATP. The NMP stretch occupies residues 30-59 (STGDMLRAAVKAGTPLGQQAKAVMDAGKLV). AMP contacts are provided by residues T31, R36, 57-59 (KLV), 85-88 (GFPR), and Q92. Positions 122 to 159 (GRRSHPASGRTYHVKFNPPKVEGKDDVTGEDLIQREDD) are LID. ATP contacts are provided by residues R123 and 132–133 (TY). Positions 127–147 (PASGRTYHVKFNPPKVEGKDD) are disordered. AMP is bound by residues R156 and R167. ATP is bound at residue G203.

This sequence belongs to the adenylate kinase family. In terms of assembly, monomer.

It localises to the cytoplasm. It catalyses the reaction AMP + ATP = 2 ADP. It participates in purine metabolism; AMP biosynthesis via salvage pathway; AMP from ADP: step 1/1. Functionally, catalyzes the reversible transfer of the terminal phosphate group between ATP and AMP. Plays an important role in cellular energy homeostasis and in adenine nucleotide metabolism. This is Adenylate kinase from Paracidovorax citrulli (strain AAC00-1) (Acidovorax citrulli).